Here is a 361-residue protein sequence, read N- to C-terminus: Aromatic amino acid aminotransferase (361 aa).

The residue at position 221 (K221) is an N6-(pyridoxal phosphate)lysine.

It belongs to the class-II pyridoxal-phosphate-dependent aminotransferase family. Homodimer. Requires pyridoxal 5'-phosphate as cofactor.

It catalyses the reaction an aromatic L-alpha-amino acid + 2-oxoglutarate = an aromatic oxo-acid + L-glutamate. Functionally, aminotransferase that catalyzes the conversion of aromatic amino acids and 2-oxoglutarate into corresponding aromatic oxo acids and L-glutamate. This Mycobacterium ulcerans (strain Agy99) protein is Aromatic amino acid aminotransferase.